Consider the following 122-residue polypeptide: Small ribosomal subunit protein uS13 (122 aa).

Residues 93–122 (RRGLPVRGQRTKTNARTRKGPKKTIAGKKK) form a disordered region.

This sequence belongs to the universal ribosomal protein uS13 family. In terms of assembly, part of the 30S ribosomal subunit. Forms a loose heterodimer with protein S19. Forms two bridges to the 50S subunit in the 70S ribosome.

Its function is as follows. Located at the top of the head of the 30S subunit, it contacts several helices of the 16S rRNA. In the 70S ribosome it contacts the 23S rRNA (bridge B1a) and protein L5 of the 50S subunit (bridge B1b), connecting the 2 subunits; these bridges are implicated in subunit movement. Contacts the tRNAs in the A and P-sites. The sequence is that of Small ribosomal subunit protein uS13 from Corynebacterium efficiens (strain DSM 44549 / YS-314 / AJ 12310 / JCM 11189 / NBRC 100395).